Here is a 107-residue protein sequence, read N- to C-terminus: Nucleoid-associated protein Msil_0275 (107 aa).

The protein belongs to the YbaB/EbfC family. In terms of assembly, homodimer.

The protein resides in the cytoplasm. The protein localises to the nucleoid. Its function is as follows. Binds to DNA and alters its conformation. May be involved in regulation of gene expression, nucleoid organization and DNA protection. The sequence is that of Nucleoid-associated protein Msil_0275 from Methylocella silvestris (strain DSM 15510 / CIP 108128 / LMG 27833 / NCIMB 13906 / BL2).